Reading from the N-terminus, the 110-residue chain is Holo-[acyl-carrier-protein] synthase (110 aa).

Asp8 and Glu54 together coordinate Mg(2+).

This sequence belongs to the P-Pant transferase superfamily. AcpS family. The cofactor is Mg(2+).

The protein resides in the cytoplasm. It carries out the reaction apo-[ACP] + CoA = holo-[ACP] + adenosine 3',5'-bisphosphate + H(+). Its function is as follows. Transfers the 4'-phosphopantetheine moiety from coenzyme A to a Ser of acyl-carrier-protein. The sequence is that of Holo-[acyl-carrier-protein] synthase from Mycoplasma mycoides subsp. mycoides SC (strain CCUG 32753 / NCTC 10114 / PG1).